We begin with the raw amino-acid sequence, 360 residues long: Fructose import permease protein FrcC (360 aa).

9 consecutive transmembrane segments (helical) span residues 48 to 68 (AAVPLIVLVLSLIAFGVILGG), 84 to 106 (AIVGIVGAAQTLVILTAGIDLSV), 125 to 145 (GFPPALSVICGLGVGALCGYI), 155 to 175 (LPPFIVTLGMWQIVLASNFLY), 205 to 225 (AVFTYGVVVMVLLVCLLWYVL), 254 to 274 (MLISIYTLSGLICALAGWALI), 284 to 304 (AGQFANIESITAVVIGGISLF), 310 to 330 (IMGMLFGALIVGVFSLGLRLM), and 335 to 355 (QWTYLLIGLLIIIAVAIDQWI).

This sequence belongs to the binding-protein-dependent transport system permease family. As to quaternary structure, the complex is composed of two ATP-binding proteins (FrcA), two transmembrane proteins (FrcC) and a solute-binding protein (FrcB).

It localises to the cell inner membrane. Its function is as follows. Part of the high-affinity ABC transporter complex FrcBCA involved in fructose uptake. Is also a high-affinity transporter for ribose and mannose. Responsible for the translocation of the substrate across the membrane. The protein is Fructose import permease protein FrcC of Rhizobium meliloti (Ensifer meliloti).